The chain runs to 601 residues: Tubulin polyglutamylase ttll-4 (601 aa).

Residues 1–18 (MSSGYSSAPSVSHTSSDT) are compositionally biased toward polar residues. Positions 1–37 (MSSGYSSAPSVSHTSSDTDLNRIDSYDDGAEETTDEQ) are disordered. Residues 138–476 (QARLTWCHNS…YVPPSFDKLS (339 aa)) form the TTL domain. Residues lysine 254, 260–261 (RG), 282–285 (QHYI), and 295–297 (KFD) each bind ATP. Arginine 260 is a binding site for a protein. Arginine 321 lines the L-glutamate pocket. 342–343 (TN) lines the ATP pocket. L-glutamate is bound by residues tyrosine 344, serine 345, and lysine 362. 3 residues coordinate Mg(2+): aspartate 422, glutamate 435, and asparagine 437. Lysine 453 is a binding site for L-glutamate.

The protein belongs to the tubulin--tyrosine ligase family. It depends on Mg(2+) as a cofactor. As to expression, expressed in many sensory neurons in amphid.

The enzyme catalyses L-glutamyl-[protein] + L-glutamate + ATP = gamma-L-glutamyl-L-glutamyl-[protein] + ADP + phosphate + H(+). Its function is as follows. Monoglutamylase which modifies tubulin, adding a single glutamate on the gamma-carboxyl group of specific glutamate residues of target proteins. Involved in the side-chain initiation step of the polyglutamylation reaction but not in the elongation step. Preferentially modifies beta-tail tubulin over the alpha-tubulin. Involved in side-chain glutamylation of tubulin in sensory cilia. Together with ttll-5 and ttll-11, required for male mating. This Caenorhabditis elegans protein is Tubulin polyglutamylase ttll-4.